Here is a 393-residue protein sequence, read N- to C-terminus: Lysophosphatidic acid receptor 1 (393 aa).

Topologically, residues methionine 1 to lysine 50 are extracellular. 2 cysteine pairs are disulfide-bonded: cysteine 24–cysteine 190 and cysteine 188–cysteine 195. Asparagine 27 and asparagine 35 each carry an N-linked (GlcNAc...) asparagine glycan. An a 1-acyl-sn-glycero-3-phosphate-binding site is contributed by lysine 39. The helical transmembrane segment at leucine 51–tyrosine 75 threads the bilayer. Residues valine 76–proline 83 are Cytoplasmic-facing. The helical transmembrane segment at isoleucine 84–phenylalanine 107 threads the bilayer. The Extracellular portion of the chain corresponds to asparagine 108 to tryptophan 121. A helical membrane pass occupies residues leucine 122–isoleucine 144. Arginine 124–aspartate 129 contacts a 1-acyl-sn-glycero-3-phosphate. The Cytoplasmic segment spans residues glutamate 145–arginine 163. The helical transmembrane segment at valine 164 to valine 184 threads the bilayer. At glycine 185–aspartate 204 the chain is on the extracellular side. Residues serine 205 to tyrosine 225 traverse the membrane as a helical segment. Position 210 (tryptophan 210) interacts with a 1-acyl-sn-glycero-3-phosphate. Residues alanine 226 to serine 255 lie on the Cytoplasmic side of the membrane. A helical membrane pass occupies residues leucine 256 to leucine 280. The Extracellular portion of the chain corresponds to aspartate 281–lysine 294. Residues cysteine 284 and cysteine 287 are joined by a disulfide bond. A helical transmembrane segment spans residues phenylalanine 295–aspartate 315. Over lysine 316–valine 393 the chain is Cytoplasmic. Phosphoserine is present on serine 341. Threonine 351 is modified (phosphothreonine). The segment covering lysine 369–glutamine 381 has biased composition (basic and acidic residues). A disordered region spans residues lysine 369–valine 393.

The protein belongs to the G-protein coupled receptor 1 family. As to quaternary structure, interacts with RALA and GRK2. Interacts with GNAQ and GNA13. Interacts with CD14; the interaction is enhanced by exposure to bacterial lipopolysaccharide (LPS). In terms of processing, N-glycosylated. As to expression, detected in brain cortex and in pituitary pars tuberalis.

It localises to the cell surface. Its subcellular location is the cell membrane. The protein localises to the endosome. Functionally, receptor for lysophosphatidic acid (LPA). Plays a role in the reorganization of the actin cytoskeleton, cell migration, differentiation and proliferation, and thereby contributes to the responses to tissue damage and infectious agents. Activates downstream signaling cascades via the G(i)/G(o), G(12)/G(13), and G(q) families of heteromeric G proteins. Signaling inhibits adenylyl cyclase activity and decreases cellular cAMP levels. Signaling triggers an increase of cytoplasmic Ca(2+) levels. Activates RALA; this leads to the activation of phospholipase C (PLC) and the formation of inositol 1,4,5-trisphosphate. Signaling mediates activation of down-stream MAP kinases. Contributes to the regulation of cell shape. Promotes Rho-dependent reorganization of the actin cytoskeleton in neuronal cells and neurite retraction. Promotes the activation of Rho and the formation of actin stress fibers. Promotes formation of lamellipodia at the leading edge of migrating cells via activation of RAC1. Through its function as LPA receptor, plays a role in chemotaxis and cell migration, including responses to injury and wounding. Plays a role in triggering inflammation in response to bacterial lipopolysaccharide (LPS) via its interaction with CD14. Promotes cell proliferation in response to LPA. Inhibits the intracellular ciliogenesis pathway in response to LPA and through AKT1 activation. Required for normal skeleton development. May play a role in osteoblast differentiation. Required for normal brain development. Required for normal proliferation, survival and maturation of newly formed neurons in the adult dentate gyrus. Plays a role in pain perception and in the initiation of neuropathic pain. The protein is Lysophosphatidic acid receptor 1 (LPAR1) of Ovis aries (Sheep).